The following is a 237-amino-acid chain: MALKDLPADAQPREKLLARGPATLADAELLAILLRTGIMGKGVLQMAQELLDPPGVDAATGQPTGGFGGIAGLLHASAADLERIKGLGPAKRAELVAVLELARRALAQQLRECAVFDTPDAVKHYLQLQLAAKGHEVFAVLFLDNQNRLLAMEELFRGTLTQTSVYPREVVLHALHHRAAAVVLAHNHPSGSVQPSRADEALTQTLKSTLALVDVRVLDHVIVAPGQALSMAEMGLL.

The 123-residue stretch at 115–237 folds into the MPN domain; sequence VFDTPDAVKH…ALSMAEMGLL (123 aa). Zn(2+)-binding residues include His186, His188, and Asp199. The JAMM motif signature appears at 186–199; the sequence is HNHPSGSVQPSRAD.

Belongs to the UPF0758 family.

The chain is UPF0758 protein Veis_1654 from Verminephrobacter eiseniae (strain EF01-2).